A 164-amino-acid polypeptide reads, in one-letter code: Kunitz-type serine protease inhibitor BbKI (164 aa).

This sequence belongs to the protease inhibitor I3 (leguminous Kunitz-type inhibitor) family. As to quaternary structure, monomer.

The protein resides in the secreted. Inhibits bovine trypsin, human plasma kallikrein and plasmin and weakly bovine chymotrypsin. This is Kunitz-type serine protease inhibitor BbKI from Bauhinia bauhinioides (Perlebia bauhinoides).